Reading from the N-terminus, the 110-residue chain is uncharacterized protein (110 aa).

Helical transmembrane passes span 5–25 (ILAI…PIHL), 62–82 (FPII…AIVS), and 90–110 (GISI…LISI).

The protein to A.fulgidus AF1754.

It localises to the cell membrane. This is an uncharacterized protein from Methanocaldococcus jannaschii (strain ATCC 43067 / DSM 2661 / JAL-1 / JCM 10045 / NBRC 100440) (Methanococcus jannaschii).